A 409-amino-acid polypeptide reads, in one-letter code: Na(+)-translocating NADH-quinone reductase subunit F (409 aa).

The chain crosses the membrane as a helical span at residues 5-25 (FIFGIIAFTALVLVLAVIILF). The 2Fe-2S ferredoxin-type domain occupies 34–128 (GDITISINDD…SMDVELPEEI (95 aa)). [2Fe-2S] cluster-binding residues include Cys-71, Cys-77, Cys-80, and Cys-112. One can recognise an FAD-binding FR-type domain in the interval 131–271 (VKKWECTVIS…SGPFGEFFAK (141 aa)).

Belongs to the NqrF family. As to quaternary structure, composed of six subunits; NqrA, NqrB, NqrC, NqrD, NqrE and NqrF. It depends on [2Fe-2S] cluster as a cofactor. The cofactor is FAD.

The protein localises to the cell inner membrane. It carries out the reaction a ubiquinone + n Na(+)(in) + NADH + H(+) = a ubiquinol + n Na(+)(out) + NAD(+). Its function is as follows. NQR complex catalyzes the reduction of ubiquinone-1 to ubiquinol by two successive reactions, coupled with the transport of Na(+) ions from the cytoplasm to the periplasm. The first step is catalyzed by NqrF, which accepts electrons from NADH and reduces ubiquinone-1 to ubisemiquinone by a one-electron transfer pathway. The polypeptide is Na(+)-translocating NADH-quinone reductase subunit F (Haemophilus ducreyi (strain 35000HP / ATCC 700724)).